The following is a 244-amino-acid chain: Transcription factor Sox-12 (244 aa).

The interval 1–22 (MVQNKTTGSCPKPTEVAPGGPS) is disordered. A DNA-binding region (HMG box) is located at residues 31 to 99 (IKRPMNAFMV…KHMADYPNYK (69 aa)). Disordered stretches follow at residues 101 to 137 (RPRR…QMDT) and 152 to 193 (GDQV…HEGL). Polar residues-rich tracts occupy residues 120-137 (STAT…QMDT) and 176-186 (HTKTVPSSPQS).

As to expression, expressed at a low level in embryos, and in the adult lung, ovary, skeletal muscle, testis, brain and heart.

The protein localises to the nucleus. Functionally, transcription factor that binds to the sequence 5'-AACAAT-3'. Acts as a transcriptional activator. The protein is Transcription factor Sox-12 (sox12) of Xenopus laevis (African clawed frog).